A 187-amino-acid chain; its full sequence is BCL2/adenovirus E1B 19 kDa protein-interacting protein 3 (187 aa).

The tract at residues 42–86 (LDAQHESGRSSSKSSHCDSPPRSQTPQDTNRAEIDSHSFGEKNST) is disordered. Phosphoserine occurs at positions 48, 60, 77, 79, 85, and 88. Residues 50 to 63 (RSSSKSSHCDSPPR) are compositionally biased toward low complexity. Residues 71-81 (NRAEIDSHSFG) are compositionally biased toward basic and acidic residues. The short motif at 93–118 (IERRREVESILKKNSDWIWDWSSRPE) is the BH3 element. A helical transmembrane segment spans residues 157–177 (VFLPSLLLSHLLAIGLGIYIG).

The protein belongs to the NIP3 family. Homodimer. Binds to BCL2. Interacts with BNIP3L and ACAA2. Interacts (via BH3 domain) with SPATA18 (via coiled-coil domains). Interacts with BOK; promotes BOK oligomerization. Interacts with PPTC7; this interaction promotes BNIP3 degradation.

The protein resides in the mitochondrion. The protein localises to the mitochondrion outer membrane. Functionally, apoptosis-inducing protein that can overcome BCL2 suppression. May play a role in repartitioning calcium between the two major intracellular calcium stores in association with BCL2. Involved in mitochondrial quality control via its interaction with SPATA18/MIEAP: in response to mitochondrial damage, participates in mitochondrial protein catabolic process (also named MALM) leading to the degradation of damaged proteins inside mitochondria. The physical interaction of SPATA18/MIEAP, BNIP3 and BNIP3L/NIX at the mitochondrial outer membrane may play a critical role in the translocation of lysosomal proteins from the cytoplasm to the mitochondrial matrix. The physical interaction of SPATA18/MIEAP, BNIP3 and BNIP3L/NIX at the mitochondrial outer membrane regulates the opening of a pore in the mitochondrial double membrane in order to mediate the translocation of lysosomal proteins from the cytoplasm to the mitochondrial matrix. Plays an important role in the calprotectin (S100A8/A9)-induced cell death pathway. This chain is BCL2/adenovirus E1B 19 kDa protein-interacting protein 3, found in Mus musculus (Mouse).